The primary structure comprises 257 residues: uncharacterized protein (257 aa).

Residues 7–27 (LFLCVSFLLITIFIGGGGFMN) form a helical membrane-spanning segment.

This sequence belongs to the staphylococcal tandem lipoprotein family.

It is found in the cell membrane. This is an uncharacterized protein from Staphylococcus epidermidis (strain ATCC 12228 / FDA PCI 1200).